The following is a 176-amino-acid chain: MNIEDLWDQFHQPLKTYISHRVNDQSIVDDLLQIVFMKIQVHLPNLIDEQKIDSWIYRITRNTIIDFYRTKKTSEILPDVLHFNDSAEEENFTKEATVCIRSTIKRLPEKYREALELTDFQGLSQKELSEKLGISYSGAKSRVQRGRGKLKQLLEGCCHIEADRYGNIVDFRILKE.

Residues 30–43 carry the Polymerase core binding motif; the sequence is DLLQIVFMKIQVHL. The H-T-H motif DNA-binding region spans 125 to 144; the sequence is QKELSEKLGISYSGAKSRVQ.

It belongs to the sigma-70 factor family. ECF subfamily.

Its function is as follows. Sigma factors are initiation factors that promote the attachment of RNA polymerase to specific initiation sites and are then released. This is RNA polymerase sigma factor SigZ (sigZ) from Bacillus subtilis (strain 168).